Consider the following 128-residue polypeptide: Sulfurtransferase TusD (128 aa).

Residue cysteine 78 is the Cysteine persulfide intermediate of the active site.

Belongs to the DsrE/TusD family. Heterohexamer, formed by a dimer of trimers. The hexameric TusBCD complex contains 2 copies each of TusB, TusC and TusD. The TusBCD complex interacts with TusE.

Its subcellular location is the cytoplasm. Its function is as follows. Part of a sulfur-relay system required for 2-thiolation of 5-methylaminomethyl-2-thiouridine (mnm(5)s(2)U) at tRNA wobble positions. Accepts sulfur from TusA and transfers it in turn to TusE. This Buchnera aphidicola subsp. Schizaphis graminum (strain Sg) protein is Sulfurtransferase TusD.